The chain runs to 312 residues: Small ribosomal subunit protein RACK1 (312 aa).

WD repeat units follow at residues 9 to 42 (GHRG…ISWK), 63 to 93 (GHTG…RMWD), 105 to 135 (KHTK…RVWN), 148 to 180 (GHED…KVWN), 192 to 222 (GHSN…LLWD), 233 to 262 (NVES…SVYD), and 279 to 307 (PSEC…RVWS).

It belongs to the WD repeat G protein beta family. Ribosomal protein RACK1 subfamily.

In Leishmania chagasi, this protein is Small ribosomal subunit protein RACK1.